The following is a 268-amino-acid chain: 4-hydroxy-tetrahydrodipicolinate reductase (268 aa).

NAD(+) contacts are provided by residues 8-13, D34, 95-97, and 121-124; these read GACGKM, GTT, and APNF. The active-site Proton donor/acceptor is H151. H152 contributes to the (S)-2,3,4,5-tetrahydrodipicolinate binding site. K155 acts as the Proton donor in catalysis. 161-162 contacts (S)-2,3,4,5-tetrahydrodipicolinate; that stretch reads GT.

It belongs to the DapB family.

The protein resides in the cytoplasm. It carries out the reaction (S)-2,3,4,5-tetrahydrodipicolinate + NAD(+) + H2O = (2S,4S)-4-hydroxy-2,3,4,5-tetrahydrodipicolinate + NADH + H(+). The enzyme catalyses (S)-2,3,4,5-tetrahydrodipicolinate + NADP(+) + H2O = (2S,4S)-4-hydroxy-2,3,4,5-tetrahydrodipicolinate + NADPH + H(+). It participates in amino-acid biosynthesis; L-lysine biosynthesis via DAP pathway; (S)-tetrahydrodipicolinate from L-aspartate: step 4/4. Its function is as follows. Catalyzes the conversion of 4-hydroxy-tetrahydrodipicolinate (HTPA) to tetrahydrodipicolinate. The protein is 4-hydroxy-tetrahydrodipicolinate reductase of Dictyoglomus turgidum (strain DSM 6724 / Z-1310).